Reading from the N-terminus, the 187-residue chain is Apolipophorin-3 (187 aa).

A signal peptide spans 1–17 (MAAKFIILLALFALSQA). Positions 18–22 (SVVRR) are excised as a propeptide.

Belongs to the insect apolipophorin-3 family. Equilibrium between a soluble monomer and a bound lipoprotein form. Apolipophorin-3 associates with lipophorin during lipid loading until each particle contains 9 or 14 molecules of apolipophorin-3. Hemolymph.

Its subcellular location is the secreted. Its function is as follows. Assists in the loading of diacylglycerol, generated from triacylglycerol stores in the fat body through the action of adipokinetic hormone, into lipophorin, the hemolymph lipoprotein. It increases the lipid carrying capacity of lipophorin by covering the expanding hydrophobic surface resulting from diacylglycerol uptake. It thus plays a critical role in the transport of lipids during flight in several species of insects. This is Apolipophorin-3 from Hyphantria cunea (Fall webworm moth).